Here is a 226-residue protein sequence, read N- to C-terminus: CASP-like protein 2BC1 (226 aa).

At 1 to 37 (MRKHIDIVFSRLSGPILNPPPDNNVIPKTDRKLRITE) the chain is on the cytoplasmic side. Residues 38–58 (VILRFAVVIFALVSAIMVGTA) form a helical membrane-spanning segment. Topologically, residues 59-78 (SGTRDLGGGIRIHAHFTLLK) are extracellular. The helical transmembrane segment at 79–99 (TLPFLVIVDGILAVYSLLQGL) threads the bilayer. Topologically, residues 100 to 114 (RCFLSLYMRHILLNK) are cytoplasmic. The chain crosses the membrane as a helical span at residues 115–135 (ALAWTIFCCDQALAYVIFAAA). The Extracellular segment spans residues 136–170 (ASTAETAYISEQGLDELQWIKVCMFFRAYCFKSGA). A helical transmembrane segment spans residues 171–191 (GMINAFLAALCMVFVSGMSVF). The Cytoplasmic segment spans residues 192-226 (HLFRLYGEKRAYGHIAEQVVISEEAAERRNSLNGI).

It belongs to the Casparian strip membrane proteins (CASP) family. In terms of assembly, homodimer and heterodimers.

The protein localises to the cell membrane. This Picea sitchensis (Sitka spruce) protein is CASP-like protein 2BC1.